Here is a 151-residue protein sequence, read N- to C-terminus: Deoxyuridine 5'-triphosphate nucleotidohydrolase (151 aa).

Substrate-binding positions include 70-72 (RSG), asparagine 83, 87-89 (LID), and methionine 97.

This sequence belongs to the dUTPase family. Requires Mg(2+) as cofactor.

The catalysed reaction is dUTP + H2O = dUMP + diphosphate + H(+). It participates in pyrimidine metabolism; dUMP biosynthesis; dUMP from dCTP (dUTP route): step 2/2. Its function is as follows. This enzyme is involved in nucleotide metabolism: it produces dUMP, the immediate precursor of thymidine nucleotides and it decreases the intracellular concentration of dUTP so that uracil cannot be incorporated into DNA. The protein is Deoxyuridine 5'-triphosphate nucleotidohydrolase of Pseudomonas putida (strain ATCC 47054 / DSM 6125 / CFBP 8728 / NCIMB 11950 / KT2440).